The following is a 377-amino-acid chain: Terpene synthase 1 (377 aa).

The DDxx(x)D/E motif motif lies at 81–86 (DDALDA). Positions 221–229 (NDLVSYEKE) match the NDxxSxxxD/E motif motif. Positions 326–359 (RKQSSSPNLTNSISIPTNNTNNSNNITSSPNKKQ) are disordered. Residues 335-356 (TNSISIPTNNTNNSNNITSSPN) show a composition bias toward low complexity.

Belongs to the terpene synthase family.

It catalyses the reaction (2E,6E)-farnesyl diphosphate = (2S,3R,6S,9S)-(-)-protoillud-7-ene + diphosphate. Its function is as follows. Terpene synthase that converts its substrate farnesyl diphosphate (FPP) into the sesquiterpene protoillud-7-ene. In Dictyostelium purpureum (Slime mold), this protein is Terpene synthase 1.